Reading from the N-terminus, the 120-residue chain is Large ribosomal subunit protein bL21 (120 aa).

It belongs to the bacterial ribosomal protein bL21 family. In terms of assembly, part of the 50S ribosomal subunit. Contacts protein L20.

Its function is as follows. This protein binds to 23S rRNA in the presence of protein L20. This chain is Large ribosomal subunit protein bL21, found in Roseiflexus castenholzii (strain DSM 13941 / HLO8).